Consider the following 24-residue polypeptide: MTKKAVVVLWGISQVEGVVNLLQE.

The protein belongs to the Cu-Zn superoxide dismutase family. As to quaternary structure, homodimer. Requires Cu cation as cofactor. The cofactor is Zn(2+).

It localises to the plastid. It is found in the chloroplast. The catalysed reaction is 2 superoxide + 2 H(+) = H2O2 + O2. In terms of biological role, destroys radicals which are normally produced within the cells and which are toxic to biological systems. This chain is Superoxide dismutase [Cu-Zn], chloroplastic, found in Picea abies (Norway spruce).